The following is a 509-amino-acid chain: Bifunctional purine biosynthesis protein PurH (509 aa).

In terms of domain architecture, MGS-like spans 1-144 (MKRALISVSD…KNYAAVTVVV (144 aa)).

The protein belongs to the PurH family.

The enzyme catalyses (6R)-10-formyltetrahydrofolate + 5-amino-1-(5-phospho-beta-D-ribosyl)imidazole-4-carboxamide = 5-formamido-1-(5-phospho-D-ribosyl)imidazole-4-carboxamide + (6S)-5,6,7,8-tetrahydrofolate. The catalysed reaction is IMP + H2O = 5-formamido-1-(5-phospho-D-ribosyl)imidazole-4-carboxamide. The protein operates within purine metabolism; IMP biosynthesis via de novo pathway; 5-formamido-1-(5-phospho-D-ribosyl)imidazole-4-carboxamide from 5-amino-1-(5-phospho-D-ribosyl)imidazole-4-carboxamide (10-formyl THF route): step 1/1. It participates in purine metabolism; IMP biosynthesis via de novo pathway; IMP from 5-formamido-1-(5-phospho-D-ribosyl)imidazole-4-carboxamide: step 1/1. The protein is Bifunctional purine biosynthesis protein PurH of Listeria monocytogenes serotype 4b (strain CLIP80459).